A 497-amino-acid chain; its full sequence is Aspartyl/glutamyl-tRNA(Asn/Gln) amidotransferase subunit B (497 aa).

It belongs to the GatB/GatE family. GatB subfamily. In terms of assembly, heterotrimer of A, B and C subunits.

It carries out the reaction L-glutamyl-tRNA(Gln) + L-glutamine + ATP + H2O = L-glutaminyl-tRNA(Gln) + L-glutamate + ADP + phosphate + H(+). The enzyme catalyses L-aspartyl-tRNA(Asn) + L-glutamine + ATP + H2O = L-asparaginyl-tRNA(Asn) + L-glutamate + ADP + phosphate + 2 H(+). In terms of biological role, allows the formation of correctly charged Asn-tRNA(Asn) or Gln-tRNA(Gln) through the transamidation of misacylated Asp-tRNA(Asn) or Glu-tRNA(Gln) in organisms which lack either or both of asparaginyl-tRNA or glutaminyl-tRNA synthetases. The reaction takes place in the presence of glutamine and ATP through an activated phospho-Asp-tRNA(Asn) or phospho-Glu-tRNA(Gln). This chain is Aspartyl/glutamyl-tRNA(Asn/Gln) amidotransferase subunit B, found in Nocardioides sp. (strain ATCC BAA-499 / JS614).